A 259-amino-acid chain; its full sequence is Oxidase ustYb (259 aa).

The chain crosses the membrane as a helical span at residues 36–56 (IIYTSLAFVGFIEILFFGIFF). Residues asparagine 102 and asparagine 122 are each glycosylated (N-linked (GlcNAc...) asparagine). 2 short sequence motifs (HXXHC) span residues 147–151 (HQLHC) and 197–201 (HVDHC).

This sequence belongs to the ustYa family.

The protein resides in the membrane. The protein operates within mycotoxin biosynthesis. Functionally, oxidase; part of the gene cluster that mediates the biosynthesis of the secondary metabolite ustiloxin B, an antimitotic tetrapeptide. First, ustA is processed by the subtilisin-like endoprotease Kex2 that is outside the ustiloxin B gene cluster, at the C-terminal side of Arg-Lys, after transfer to Golgi apparatus through the endoplasmic reticulum (ER). Cleavage by KEX2 generates 16 peptides YAIG-I to YAIG-XVI. To process the precursor peptide further, at least two peptidases are necessary to cleave the N-terminal and C-terminal sides of the Tyr-Ala-Ile-Gly core peptide which serves as backbone for the synthesis of ustiloxin B, through cyclization and modification of the tyrosine with a non-protein coding amino acid, norvaline. One of the two peptidases must be the serine peptidase ustP; and the other pepdidase is probably ustH. Macrocyclization of the core peptide derived from ustA requires the tyrosinase ustQ, as well as the homologous oxidases ustYa and ustYb, and leads to the production of the first cyclization product N-desmethylustiloxin F. For the formation of N-desmethylustiloxin F, three oxidation steps are required, hydroxylation at the benzylic position, hydroxylation at either the aromatic ring of Tyr or beta-position of Ile, and oxidative cyclization. UstQ may catalyze the oxidation of a phenol moiety, whereas the ustYa and ustYb are most likely responsible for the remaining two-step oxidations. N-desmethylustiloxin F is then methylated by ustM to yield ustiloxin F which in turn substrate of the cytochrome P450 monooxygenase ustC which catalyzes the formation of S-deoxyustiloxin H. The flavoprotein monooxygenases ustF1 and ustF2 then participate in the modification of the side chain of S-deoxyustiloxin H, leading to the synthesis of an oxime intermediate, via ustiloxin H. Finally, carboxylative dehydration performed by the cysteine desulfurase-like protein ustD yields ustiloxin B. The protein is Oxidase ustYb of Aspergillus flavus (strain ATCC 200026 / FGSC A1120 / IAM 13836 / NRRL 3357 / JCM 12722 / SRRC 167).